A 1382-amino-acid polypeptide reads, in one-letter code: ATP-dependent RNA helicase TDRD9 (1382 aa).

Residues 36-62 (AAREEVQRQDVAPGAGPAAQAPALAQA) form a disordered region. Low complexity predominate over residues 47–62 (APGAGPAAQAPALAQA). The 167-residue stretch at 142 to 308 (VSLIESNSVV…FAVPVQNKMN (167 aa)) folds into the Helicase ATP-binding domain. ATP is bound at residue 155 to 162 (GATGSGKS). Positions 254-257 (DEVH) match the DEAH box motif. In terms of domain architecture, Helicase C-terminal spans 377 to 544 (SGAQFVLERS…ILKVKLLDMG (168 aa)). The 61-residue stretch at 944 to 1004 (HPHPDLVCLA…MEIPCQFLEL (61 aa)) folds into the Tudor domain.

Belongs to the DEAD box helicase family. DEAH subfamily. Interacts with piRNA-associated proteins PIWIL1 and PIWIL4.

The protein localises to the cytoplasm. It is found in the nucleus. It catalyses the reaction ATP + H2O = ADP + phosphate + H(+). Functionally, ATP-binding RNA helicase required during spermatogenesis. Required to repress transposable elements and prevent their mobilization, which is essential for the germline integrity. Acts via the piRNA metabolic process, which mediates the repression of transposable elements during meiosis by forming complexes composed of piRNAs and Piwi proteins and governs the methylation and subsequent repression of transposons. Acts downstream of piRNA biogenesis: exclusively required for transposon silencing in the nucleus, suggesting that it acts as a nuclear effector in the nucleus together with PIWIL4. The sequence is that of ATP-dependent RNA helicase TDRD9 from Homo sapiens (Human).